The sequence spans 407 residues: 1-deoxy-D-xylulose 5-phosphate reductoisomerase (407 aa).

Residues threonine 22, glycine 23, serine 24, isoleucine 25, glycine 48, asparagine 51, and asparagine 128 each contribute to the NADPH site. Lysine 129 contacts 1-deoxy-D-xylulose 5-phosphate. Glutamate 130 provides a ligand contact to NADPH. Mn(2+) is bound at residue aspartate 152. Serine 153, glutamate 154, serine 178, and histidine 201 together coordinate 1-deoxy-D-xylulose 5-phosphate. A Mn(2+)-binding site is contributed by glutamate 154. Glycine 207 is an NADPH binding site. 1-deoxy-D-xylulose 5-phosphate contacts are provided by serine 214, asparagine 219, lysine 220, and glutamate 223. Residue glutamate 223 coordinates Mn(2+).

Belongs to the DXR family. It depends on Mg(2+) as a cofactor. Requires Mn(2+) as cofactor.

The enzyme catalyses 2-C-methyl-D-erythritol 4-phosphate + NADP(+) = 1-deoxy-D-xylulose 5-phosphate + NADPH + H(+). Its pathway is isoprenoid biosynthesis; isopentenyl diphosphate biosynthesis via DXP pathway; isopentenyl diphosphate from 1-deoxy-D-xylulose 5-phosphate: step 1/6. Its function is as follows. Catalyzes the NADPH-dependent rearrangement and reduction of 1-deoxy-D-xylulose-5-phosphate (DXP) to 2-C-methyl-D-erythritol 4-phosphate (MEP). The polypeptide is 1-deoxy-D-xylulose 5-phosphate reductoisomerase (Mycobacterium avium (strain 104)).